The chain runs to 232 residues: Putative B3 domain-containing protein Os11g0242900 (232 aa).

Positions 1-51 (MTVELEKIAGSFFISKGWKTFVHRTGLLSGQYIRFQVLTPSKINVLLFDKK) form a DNA-binding region, TF-B3 1. The disordered stretch occupies residues 92 to 121 (SHTSNKETSSDSRTESMTDIPSSSDNSGET). The segment covering 95–107 (SNKETSSDSRTES) has biased composition (basic and acidic residues). The segment covering 108-121 (MTDIPSSSDNSGET) has biased composition (polar residues). Residues 140–232 (DIKNYISIIG…PNVKITIDVL (93 aa)) constitute a DNA-binding region (TF-B3 2).

It is found in the nucleus. The protein is Putative B3 domain-containing protein Os11g0242900 of Oryza sativa subsp. japonica (Rice).